A 140-amino-acid polypeptide reads, in one-letter code: Small ribosomal subunit protein eS17y (140 aa).

The protein belongs to the eukaryotic ribosomal protein eS17 family.

This Arabidopsis thaliana (Mouse-ear cress) protein is Small ribosomal subunit protein eS17y (RPS17B).